The sequence spans 286 residues: uncharacterized protein (286 aa).

Residues 2–221 enclose the Radical SAM core domain; it reads VDGMKHLILK…PIYIKNLQKR (220 aa). C16, C20, and C23 together coordinate [4Fe-4S] cluster.

The protein belongs to the radical SAM superfamily. Anaerobic sulfatase-maturating enzyme family. [4Fe-4S] cluster is required as a cofactor.

This is an uncharacterized protein from Methanocaldococcus jannaschii (strain ATCC 43067 / DSM 2661 / JAL-1 / JCM 10045 / NBRC 100440) (Methanococcus jannaschii).